Consider the following 281-residue polypeptide: Pantothenate synthetase (281 aa).

30 to 37 (MGNLHAGH) is a binding site for ATP. The Proton donor role is filled by His-37. Gln-61 serves as a coordination point for (R)-pantoate. Gln-61 lines the beta-alanine pocket. An ATP-binding site is contributed by 149-152 (GRKD). Gln-155 provides a ligand contact to (R)-pantoate. Residues Val-178 and 186-189 (MSSR) each bind ATP.

Belongs to the pantothenate synthetase family. As to quaternary structure, homodimer.

It localises to the cytoplasm. It catalyses the reaction (R)-pantoate + beta-alanine + ATP = (R)-pantothenate + AMP + diphosphate + H(+). It participates in cofactor biosynthesis; (R)-pantothenate biosynthesis; (R)-pantothenate from (R)-pantoate and beta-alanine: step 1/1. Catalyzes the condensation of pantoate with beta-alanine in an ATP-dependent reaction via a pantoyl-adenylate intermediate. The chain is Pantothenate synthetase from Shewanella amazonensis (strain ATCC BAA-1098 / SB2B).